The following is a 278-amino-acid chain: Protein MGF 505-3R (278 aa).

This sequence belongs to the asfivirus MGF 505 family.

Functionally, plays a role in virus cell tropism, and may be required for efficient virus replication in macrophages. This chain is Protein MGF 505-3R, found in African swine fever virus (isolate Tick/Malawi/Lil 20-1/1983) (ASFV).